The following is a 352-amino-acid chain: Rhodopsin (352 aa).

Over 1–36 (MNGTEGPFFYIPMVNTTGVVRSPYEYPQYYLVNPAA) the chain is Extracellular. Asparagine 2 and asparagine 15 each carry an N-linked (GlcNAc...) asparagine glycan. The helical transmembrane segment at 37–61 (YACLGAYMFFLILVGFPVNFLTLYV) threads the bilayer. The Cytoplasmic portion of the chain corresponds to 62-73 (TLEHKKLRTPLN). Residues 74 to 96 (YILLNLAVADLFMVFGGFTTTIY) traverse the membrane as a helical segment. Residues 97-110 (TSMHGYFVLGRLGC) lie on the Extracellular side of the membrane. A disulfide bridge links cysteine 110 with cysteine 187. Residues 111–133 (NIEGFFATLGGEIALWSLVVLAI) form a helical membrane-spanning segment. Positions 134 to 136 (ERW) match the 'Ionic lock' involved in activated form stabilization motif. At 134–152 (ERWVVVCKPISNFRFGENH) the chain is on the cytoplasmic side. The chain crosses the membrane as a helical span at residues 153-173 (AIMGVAFTWFMASACAVPPLV). Topologically, residues 174-202 (GWSRYIPEGMQCSCGIDYYTRAEGFNNES) are extracellular. Residue asparagine 200 is glycosylated (N-linked (GlcNAc...) asparagine). A helical membrane pass occupies residues 203-224 (FVIYMFTVHFCIPLAVVGFCYG). Topologically, residues 225 to 252 (RLLCAVKEAAAAQQESETTQRAEREVSR) are cytoplasmic. A helical transmembrane segment spans residues 253–274 (MVVIMVIGFLVCWLPYASVAWY). At 275 to 286 (IFTHQGSEFGPL) the chain is on the extracellular side. Residues 287–308 (FMTIPAFFAKSSSIYNPMIYIC) form a helical membrane-spanning segment. N6-(retinylidene)lysine is present on lysine 296. The Cytoplasmic portion of the chain corresponds to 309–352 (MNKQFRHCMITTLCCGKNPFEEEEGASTTKTEASSVSSSSVSPA). 2 S-palmitoyl cysteine lipidation sites follow: cysteine 322 and cysteine 323. Residues 331–352 (EEGASTTKTEASSVSSSSVSPA) form a disordered region. Residues 342-352 (SSVSSSSVSPA) are compositionally biased toward low complexity.

Belongs to the G-protein coupled receptor 1 family. Opsin subfamily. In terms of processing, phosphorylated on some or all of the serine and threonine residues present in the C-terminal region. Post-translationally, contains one covalently linked retinal chromophore.

Its subcellular location is the membrane. The protein resides in the cell projection. The protein localises to the cilium. It is found in the photoreceptor outer segment. In terms of biological role, photoreceptor required for image-forming vision at low light intensity. While most salt water fish species use retinal as chromophore, most freshwater fish use 3-dehydroretinal, or a mixture of retinal and 3-dehydroretinal. Light-induced isomerization of 11-cis to all-trans retinal triggers a conformational change that activates signaling via G-proteins. Subsequent receptor phosphorylation mediates displacement of the bound G-protein alpha subunit by arrestin and terminates signaling. This chain is Rhodopsin (rho), found in Gobius niger (Black goby).